Here is a 232-residue protein sequence, read N- to C-terminus: Small ribosomal subunit protein uS3 (232 aa).

The KH type-2 domain occupies 39-107 (VRQFLTKELA…PAQINIAEVR (69 aa)).

This sequence belongs to the universal ribosomal protein uS3 family. In terms of assembly, part of the 30S ribosomal subunit. Forms a tight complex with proteins S10 and S14.

In terms of biological role, binds the lower part of the 30S subunit head. Binds mRNA in the 70S ribosome, positioning it for translation. This chain is Small ribosomal subunit protein uS3, found in Erwinia tasmaniensis (strain DSM 17950 / CFBP 7177 / CIP 109463 / NCPPB 4357 / Et1/99).